The chain runs to 233 residues: Cysteine-rich venom protein LIO1 (233 aa).

A signal peptide spans 1 to 18 (MIVFILLSFAAVLQQSFG). Positions 37 to 165 (VDTHNSYRRS…PYNYFYVCQY (129 aa)) constitute an SCP domain. 7 disulfide bridges follow: C74/C152, C91/C166, C147/C163, C185/C192, C188/C197, C210/C228, and C219/C232. A ShKT domain is found at 201 to 233 (CTSENVFTNCNDMVKESGCQDERMKSICPASCF).

The protein belongs to the CRISP family. In terms of tissue distribution, expressed by the venom gland.

It is found in the secreted. In terms of biological role, blocks contraction of smooth muscle elicited by high potassium-induced depolarization, but does not block caffeine-stimulated contraction. May target voltage-gated calcium channels on smooth muscle. This Erythrolamprus poecilogyrus (Water snake) protein is Cysteine-rich venom protein LIO1.